Reading from the N-terminus, the 2531-residue chain is Mediator of RNA polymerase II transcription subunit 12 (2531 aa).

Disordered stretches follow at residues 1–41 (MLSM…VKHG), 204–283 (QNHD…GSVM), 584–604 (VSRRREEDQVEPRPPYEPKQD), and 742–762 (TTATKTSPPPPAPPPTTTHGF). The segment covering 210-247 (SSNGTTSGSLTAAGNGPASNGSTGTSSINSVTGSSAST) has biased composition (low complexity). Residues 586-604 (RRREEDQVEPRPPYEPKQD) show a composition bias toward basic and acidic residues. Phosphothreonine is present on T745. 2 positions are modified to phosphoserine: S748 and S781. The span at 748 to 757 (SPPPPAPPPT) shows a compositional bias: pro residues. The span at 796–805 (EKGQQHEAPD) shows a compositional bias: basic and acidic residues. A disordered region spans residues 796–824 (EKGQQHEAPDSPKIGPPGDGETNPGGSIS). Residues S806 and S1356 each carry the phosphoserine modification. At T1360 the chain carries Phosphothreonine. Polar residues-rich tracts occupy residues 1585 to 1595 (VSKSDCNSSGS) and 1901 to 1910 (TPSSVDQSPS). Disordered regions lie at residues 1585-1608 (VSKSDCNSSGSGDEREKSNSCHSS), 1898-2092 (KADT…NQYA), 2114-2218 (QALS…GMAP), and 2469-2508 (MGGGAGGGMGAGPQQGGGAVGGGAGGGMVPQQQSMNQQQT). Basic residues predominate over residues 1919–1933 (GRGKGTTTRKRKPKN). Composition is skewed to low complexity over residues 1938-2038 (PVVN…QQLN) and 2045-2055 (QPNPQMNFMQQ). Gly residues predominate over residues 2056–2066 (GPGGGGAGPQG). 3 stretches are compositionally biased toward low complexity: residues 2067 to 2080 (MPGQQQQWHNAPQQ), 2121 to 2132 (RQRQPFQQQAQQ), and 2139 to 2205 (NPMQ…QQQQ). Gly residues predominate over residues 2469–2496 (MGGGAGGGMGAGPQQGGGAVGGGAGGGM). Low complexity predominate over residues 2497–2507 (VPQQQSMNQQQ).

It belongs to the Mediator complex subunit 12 family. In terms of assembly, component of the Cdk8 module of the Mediator complex, composed of CycC, Cdk8, kto and skd.

Its subcellular location is the nucleus. Component of the Mediator complex, a coactivator involved in regulated gene transcription of nearly all RNA polymerase II-dependent genes. Mediator functions as a bridge to convey information from gene-specific regulatory proteins to the basal RNA polymerase II transcription machinery. Mediator is recruited to promoters by direct interactions with regulatory proteins and serves as a scaffold for the assembly of a functional preinitiation complex with RNA polymerase II and the general transcription factors. Required for leg and eye development and macrochaete specification or differentiation. This chain is Mediator of RNA polymerase II transcription subunit 12 (kto), found in Drosophila melanogaster (Fruit fly).